A 153-amino-acid polypeptide reads, in one-letter code: UPF0743 protein YCR087C-A (153 aa).

2 consecutive C2HC LYAR-type zinc fingers follow at residues 1–26 and 27–52; these read MVTFNCEVCNDTVPKKNTEKHYYRCP and NAYYTCIDCSKTFEDGVSYKNHTSCI. Positions 6, 9, 21, 25, 32, 35, 48, and 51 each coordinate Zn(2+). Residues 63–96 form a disordered region; that stretch reads YKGNKKQKQKQQQKQQQKQHQHQPVATPAKKVEK. Residues 65 to 83 show a composition bias toward basic residues; that stretch reads GNKKQKQKQQQKQQQKQHQ.

It belongs to the UPF0743 family.

Its subcellular location is the nucleus. The protein resides in the nucleolus. In Saccharomyces cerevisiae (strain ATCC 204508 / S288c) (Baker's yeast), this protein is UPF0743 protein YCR087C-A.